The chain runs to 234 residues: Phosphoribosylaminoimidazole-succinocarboxamide synthase (234 aa).

This sequence belongs to the SAICAR synthetase family.

It carries out the reaction 5-amino-1-(5-phospho-D-ribosyl)imidazole-4-carboxylate + L-aspartate + ATP = (2S)-2-[5-amino-1-(5-phospho-beta-D-ribosyl)imidazole-4-carboxamido]succinate + ADP + phosphate + 2 H(+). The protein operates within purine metabolism; IMP biosynthesis via de novo pathway; 5-amino-1-(5-phospho-D-ribosyl)imidazole-4-carboxamide from 5-amino-1-(5-phospho-D-ribosyl)imidazole-4-carboxylate: step 1/2. This Staphylococcus aureus (strain COL) protein is Phosphoribosylaminoimidazole-succinocarboxamide synthase.